We begin with the raw amino-acid sequence, 94 residues long: Putative defensin-like protein 88 (94 aa).

The N-terminal stretch at 1 to 26 is a signal peptide; it reads MATQKFSYFLLVLLMVFALILPSIIS. Cystine bridges form between C32–C72, C38–C59, and C48–C71.

This sequence belongs to the DEFL family.

Its subcellular location is the secreted. The sequence is that of Putative defensin-like protein 88 from Arabidopsis thaliana (Mouse-ear cress).